The chain runs to 60 residues: Large ribosomal subunit protein bL32 (60 aa).

This sequence belongs to the bacterial ribosomal protein bL32 family.

The chain is Large ribosomal subunit protein bL32 from Synechococcus sp. (strain JA-3-3Ab) (Cyanobacteria bacterium Yellowstone A-Prime).